The primary structure comprises 376 residues: MYKLLKKSGKARRGEFTTPHGVIQTPVFMNVGTLAAIKGAVSSMDLKEIGCQVELSNTYHLHLRPGDEVVKKMGGLHKFMNWDRPILTDSGGFQVFSLSKIRKIQEEGVYFNSHIDGRKIFMGPEESMRIQSNLASTIAMAFDECVENPAPREYVEKSVERTTRWLHRCKDEMNRLNSLPDTINNKQMLFGINQGGTYEDIRIEHAKTIAKMDLDGYAIGGLAVGESHEDMYRIIDAVVPHLPEDKPIYLMGVGIPSNILEAVDRGVDFFDCVLPARNGRHAHVFTKEGKINLLNAKFELDDKPIDEGCQCPACKHYTRSYIRHLFKAKEMLAMRLCVLHNLYFYNNLMEEIRDAIDGDYFKEYKERKLKEWGGRA.

Asp89 acts as the Proton acceptor in catalysis. Substrate-binding positions include 89 to 93 (DSGGF), Asp143, Gln194, and Gly221. The tract at residues 252 to 258 (GVGIPSN) is RNA binding. Asp271 functions as the Nucleophile in the catalytic mechanism. An RNA binding; important for wobble base 34 recognition region spans residues 276–280 (ARNGR). Positions 309, 311, 314, and 340 each coordinate Zn(2+).

The protein belongs to the queuine tRNA-ribosyltransferase family. As to quaternary structure, homodimer. Within each dimer, one monomer is responsible for RNA recognition and catalysis, while the other monomer binds to the replacement base PreQ1. Zn(2+) serves as cofactor.

The enzyme catalyses 7-aminomethyl-7-carbaguanine + guanosine(34) in tRNA = 7-aminomethyl-7-carbaguanosine(34) in tRNA + guanine. The protein operates within tRNA modification; tRNA-queuosine biosynthesis. Catalyzes the base-exchange of a guanine (G) residue with the queuine precursor 7-aminomethyl-7-deazaguanine (PreQ1) at position 34 (anticodon wobble position) in tRNAs with GU(N) anticodons (tRNA-Asp, -Asn, -His and -Tyr). Catalysis occurs through a double-displacement mechanism. The nucleophile active site attacks the C1' of nucleotide 34 to detach the guanine base from the RNA, forming a covalent enzyme-RNA intermediate. The proton acceptor active site deprotonates the incoming PreQ1, allowing a nucleophilic attack on the C1' of the ribose to form the product. After dissociation, two additional enzymatic reactions on the tRNA convert PreQ1 to queuine (Q), resulting in the hypermodified nucleoside queuosine (7-(((4,5-cis-dihydroxy-2-cyclopenten-1-yl)amino)methyl)-7-deazaguanosine). The protein is Queuine tRNA-ribosyltransferase of Clostridium botulinum (strain Okra / Type B1).